The primary structure comprises 39 residues: Large ribosomal subunit protein bL36 (39 aa).

It belongs to the bacterial ribosomal protein bL36 family.

The polypeptide is Large ribosomal subunit protein bL36 (Levilactobacillus brevis (strain ATCC 367 / BCRC 12310 / CIP 105137 / JCM 1170 / LMG 11437 / NCIMB 947 / NCTC 947) (Lactobacillus brevis)).